The chain runs to 478 residues: Cytochrome P450 monooxygenase asqL (478 aa).

Residue Cys-407 coordinates heme.

The protein belongs to the cytochrome P450 family. Heme serves as cofactor.

The protein operates within secondary metabolite biosynthesis. It functions in the pathway alkaloid biosynthesis. It participates in mycotoxin biosynthesis. Its function is as follows. Cytochrome P450 monooxygenase; part of the gene cluster that mediates the biosynthesis of the aspoquinolone mycotoxins. The role of asqL within the aspoquinolone pathway has still to be determined. The first step of the pathway is catalyzed by the nonribosomal peptide synthetase asqK that condenses anthranilic acid and O-methyl-L-tyrosine to produce 4'-methoxycyclopeptin. 4'-methoxycyclopeptin is then converted to 4'-methoxydehydrocyclopeptin by the ketoglutarate-dependent dioxygenase asqJ. AsqJ also converts its first product 4'-methoxydehydrocyclopeptin to 4'-methoxycyclopenin. The following conversion of 4'-methoxycyclopenin into 4'-methoxyviridicatin is catalyzed by the cyclopenase asqI. 4'-methoxyviridicatin is the precursor of quinolone natural products, and is further converted to quinolinone B. The prenyltransferase asqH1 then catalyzes the canonical Friedel-Crafts alkylation of quinolinone B with dimethylallyl cation to yield dimethylallyl quinolone, which is subjected to FAD-dependent dehydrogenation by the FAD-linked oxidoreductase asqF to yield conjugated aryl diene. The delta(3') double bond then serves as the site of the second alkylation with DMAPP catalyzed by the prenyltransferase asqH2 to yield a carbenium ion intermediate, which can be attacked by H(2)O to yield a styrenyl quinolone containing a C3'-hydroxyprenyl chain. The FAD-dependent monooxygenase asqG performs epoxidation of the terminal C7'-C8' olefin. Finally, after dehydratation of the epoxide at C3 by asqC, the quinolone epoxide rearrangement protein asqO catalyzes an enzymatic 3-exo-tet cyclization to yield the cyclopropyl-THF ring system in aspoquinolone. This is Cytochrome P450 monooxygenase asqL from Emericella nidulans (strain FGSC A4 / ATCC 38163 / CBS 112.46 / NRRL 194 / M139) (Aspergillus nidulans).